Consider the following 316-residue polypeptide: Tyrosine--tRNA ligase 2 (316 aa).

L-tyrosine is bound by residues tyrosine 26, tyrosine 146, glutamine 150, aspartate 153, and glutamine 168. Positions 219 to 223 (KMSKS) match the 'KMSKS' region motif. An ATP-binding site is contributed by lysine 222.

Belongs to the class-I aminoacyl-tRNA synthetase family. TyrS type 4 subfamily. Homodimer.

It localises to the cytoplasm. The enzyme catalyses tRNA(Tyr) + L-tyrosine + ATP = L-tyrosyl-tRNA(Tyr) + AMP + diphosphate + H(+). Its function is as follows. Catalyzes the attachment of tyrosine to tRNA(Tyr) in a two-step reaction: tyrosine is first activated by ATP to form Tyr-AMP and then transferred to the acceptor end of tRNA(Tyr). The protein is Tyrosine--tRNA ligase 2 of Pyrobaculum aerophilum (strain ATCC 51768 / DSM 7523 / JCM 9630 / CIP 104966 / NBRC 100827 / IM2).